A 57-amino-acid chain; its full sequence is Protein YnaL (57 aa).

Residues 7–57 (LQIPVPEPIPGDPVPVPDPIPRPQPMPDPPPDEEPIKLSHRERRSARIRAC) are disordered. Residues 11 to 35 (VPEPIPGDPVPVPDPIPRPQPMPDP) are compositionally biased toward pro residues. The segment covering 46 to 57 (HRERRSARIRAC) has biased composition (basic residues).

The protein is Protein YnaL of Escherichia coli (strain K12).